Consider the following 259-residue polypeptide: MNKPVLVSFLVSGDPNPDATLKFMKALDKYSGVIELGIPFSDPVADGPTIQAADVRALSNGFKIAKSFEVLKEFRKESDTPVILMTYYNPVFKRGIETFVMQAKEAGANGLIIVDLPLQEATEYREICKKHEMGTVFLAAPNTPEERLKISDEASTEFLYLISTFGITGARESFEQMTFDFIKRARTTCKGKICVGFGISKGSHAESLIEQGADGVIVGSAFVDIIKNYGDSEEALVKLEELAKELSEGIEKGYEKRNK.

Catalysis depends on proton acceptor residues Glu35 and Asp46.

Belongs to the TrpA family. As to quaternary structure, tetramer of two alpha and two beta chains.

It carries out the reaction (1S,2R)-1-C-(indol-3-yl)glycerol 3-phosphate + L-serine = D-glyceraldehyde 3-phosphate + L-tryptophan + H2O. Its pathway is amino-acid biosynthesis; L-tryptophan biosynthesis; L-tryptophan from chorismate: step 5/5. In terms of biological role, the alpha subunit is responsible for the aldol cleavage of indoleglycerol phosphate to indole and glyceraldehyde 3-phosphate. This Methanococcus maripaludis (strain C7 / ATCC BAA-1331) protein is Tryptophan synthase alpha chain.